A 357-amino-acid chain; its full sequence is tRNA-specific 2-thiouridylase MnmA (357 aa).

ATP is bound by residues 7–14 (GMSGGVDS) and Met33. Cys103 (nucleophile) is an active-site residue. Cys103 and Cys200 are oxidised to a cystine. Position 127 (Gly127) interacts with ATP. The interaction with tRNA stretch occupies residues 150–152 (KDQ). The Cysteine persulfide intermediate role is filled by Cys200. Residues 306 to 307 (RY) form an interaction with tRNA region.

It belongs to the MnmA/TRMU family.

It is found in the cytoplasm. It catalyses the reaction S-sulfanyl-L-cysteinyl-[protein] + uridine(34) in tRNA + AH2 + ATP = 2-thiouridine(34) in tRNA + L-cysteinyl-[protein] + A + AMP + diphosphate + H(+). Catalyzes the 2-thiolation of uridine at the wobble position (U34) of tRNA, leading to the formation of s(2)U34. This chain is tRNA-specific 2-thiouridylase MnmA, found in Lachnoclostridium phytofermentans (strain ATCC 700394 / DSM 18823 / ISDg) (Clostridium phytofermentans).